The chain runs to 585 residues: Urease subunit alpha (585 aa).

In terms of domain architecture, Urease spans 132–585; sequence GGIDTHIHFI…LPMAQRYFLF (454 aa). Ni(2+)-binding residues include histidine 137, histidine 139, and lysine 220. Residue lysine 220 is modified to N6-carboxylysine. Histidine 222 provides a ligand contact to substrate. Ni(2+) contacts are provided by histidine 249 and histidine 275. The active-site Proton donor is the histidine 323. Aspartate 363 is a binding site for Ni(2+).

This sequence belongs to the metallo-dependent hydrolases superfamily. Urease alpha subunit family. As to quaternary structure, heterotrimer of UreA (gamma), UreB (beta) and UreC (alpha) subunits. Three heterotrimers associate to form the active enzyme. Ni cation serves as cofactor. Post-translationally, carboxylation allows a single lysine to coordinate two nickel ions.

It is found in the cytoplasm. It catalyses the reaction urea + 2 H2O + H(+) = hydrogencarbonate + 2 NH4(+). The protein operates within nitrogen metabolism; urea degradation; CO(2) and NH(3) from urea (urease route): step 1/1. This is Urease subunit alpha from Pseudarthrobacter chlorophenolicus (strain ATCC 700700 / DSM 12829 / CIP 107037 / JCM 12360 / KCTC 9906 / NCIMB 13794 / A6) (Arthrobacter chlorophenolicus).